We begin with the raw amino-acid sequence, 588 residues long: DNA mismatch repair protein MutL (588 aa).

This sequence belongs to the DNA mismatch repair MutL/HexB family.

Functionally, this protein is involved in the repair of mismatches in DNA. It is required for dam-dependent methyl-directed DNA mismatch repair. May act as a 'molecular matchmaker', a protein that promotes the formation of a stable complex between two or more DNA-binding proteins in an ATP-dependent manner without itself being part of a final effector complex. The sequence is that of DNA mismatch repair protein MutL from Fervidobacterium nodosum (strain ATCC 35602 / DSM 5306 / Rt17-B1).